The sequence spans 128 residues: Translation initiation factor 5A (128 aa).

Lysine 35 bears the Hypusine mark.

The protein belongs to the eIF-5A family.

Its subcellular location is the cytoplasm. In terms of biological role, functions by promoting the formation of the first peptide bond. The polypeptide is Translation initiation factor 5A (Methanosarcina barkeri (strain Fusaro / DSM 804)).